The sequence spans 682 residues: MSRKQLALFEPVLLVQALTDAVKKLSPRAQWRNPVMFVVWAGSVLTTLLTLAMVTGQIAGSALFTGIISLWLWFTVLFANFAEALAEGRSKAQANSLKGVKKTAFARRLRAPRHDAQADNVPAAELRKGDIVLVKAGDIIPCDGEVIEGGASVDESAITGESAPVIRESGGDFASVTGGTRILSDWLVIACSVNPGETFLDRMIAMVEGAQRRKTPNEIALTILLIALTIVFLLATATLWPFSAWGGNAVSVTVLVALLVCLIPTTIGGLLSAIGVAGMSRMLGANVIATSGRAVEAAGDVDVLLLDKTGTITLGNRQASDFIPARGVDERTLADAAQLASLADETPEGRSIVILAKQRFNLRERDVQSLHATFVPFTAQSRMSGINIDNRMIRKGSVDAIRRHVESNGGHFPADVEQNVENVARLGATPLVVVEGARVLGVITLKDIVKGGIKERFAQLRKMGIKTVMITGDNRLTAAAIAAEAGVDDFLAEATPEAKLALIRQYQAEGRLVAMTGDGTNDAPALAQADVAVAMNSGTQAAKEAGNMVDLDSNPTKLIEVVHIGKQMLMTRGSLTTFSIANDVAKYFAIIPAAFAATYPQLNALNVMGLHSPNSAILSAVIFNALIIIFLIPLALKGVSYKPLSASAMLRRNLWNYGLGGLVVPFIGIKVIDVLLTLLGLA.

The next 4 helical transmembrane spans lie at Pro-34–Val-54, Ile-58–Phe-78, Ile-219–Leu-239, and Val-254–Ile-274. Catalysis depends on Asp-307, which acts as the 4-aspartylphosphate intermediate. ATP-binding positions include Asp-344, Glu-348, Phe-377 to Ser-384, and Lys-395. Residues Asp-518 and Asp-522 each coordinate Mg(2+). A run of 3 helical transmembrane segments spans residues Phe-588–Met-608, Ala-616–Leu-636, and Leu-662–Ala-682.

It belongs to the cation transport ATPase (P-type) (TC 3.A.3) family. Type IA subfamily. The system is composed of three essential subunits: KdpA, KdpB and KdpC.

It localises to the cell inner membrane. It carries out the reaction K(+)(out) + ATP + H2O = K(+)(in) + ADP + phosphate + H(+). Functionally, part of the high-affinity ATP-driven potassium transport (or Kdp) system, which catalyzes the hydrolysis of ATP coupled with the electrogenic transport of potassium into the cytoplasm. This subunit is responsible for energy coupling to the transport system and for the release of the potassium ions to the cytoplasm. In Salmonella agona (strain SL483), this protein is Potassium-transporting ATPase ATP-binding subunit.